Here is a 137-residue protein sequence, read N- to C-terminus: Nucleoside diphosphate kinase (137 aa).

6 residues coordinate ATP: lysine 10, phenylalanine 59, arginine 87, threonine 93, arginine 104, and asparagine 114. Histidine 117 acts as the Pros-phosphohistidine intermediate in catalysis.

It belongs to the NDK family. Homotetramer. Mg(2+) is required as a cofactor.

The protein resides in the cytoplasm. It catalyses the reaction a 2'-deoxyribonucleoside 5'-diphosphate + ATP = a 2'-deoxyribonucleoside 5'-triphosphate + ADP. It carries out the reaction a ribonucleoside 5'-diphosphate + ATP = a ribonucleoside 5'-triphosphate + ADP. Its function is as follows. Major role in the synthesis of nucleoside triphosphates other than ATP. The ATP gamma phosphate is transferred to the NDP beta phosphate via a ping-pong mechanism, using a phosphorylated active-site intermediate. The polypeptide is Nucleoside diphosphate kinase (Streptomyces avermitilis (strain ATCC 31267 / DSM 46492 / JCM 5070 / NBRC 14893 / NCIMB 12804 / NRRL 8165 / MA-4680)).